The sequence spans 674 residues: Phosphopantothenoylcysteine decarboxylase subunit VHS3 (674 aa).

5 disordered regions span residues Met-1–Ser-164, Leu-190–Val-230, Gln-348–Gly-368, Thr-384–Val-426, and Val-575–Ser-674. Residues Ala-15–Pro-81 are compositionally biased toward polar residues. The residue at position 90 (Thr-90) is a Phosphothreonine. Residues Glu-106 to Gln-116 are compositionally biased toward polar residues. A compositionally biased stretch (basic and acidic residues) spans Asn-137–Glu-150. Residues Ser-152 to Ser-164 show a composition bias toward polar residues. Positions Ser-198–Leu-212 are enriched in basic and acidic residues. Residues Thr-214–Val-230 show a composition bias toward low complexity. The segment covering Ser-351–Gly-368 has biased composition (polar residues). Residues Thr-384–Asn-395 are compositionally biased toward low complexity. The span at Met-403–Val-426 shows a compositional bias: polar residues. The segment covering Glu-580–Asp-591 has biased composition (acidic residues). Residues Asp-592 to Asp-602 are compositionally biased toward basic and acidic residues. The segment covering Glu-603 to Asp-660 has biased composition (acidic residues). Over residues Glu-661–Ser-674 the composition is skewed to basic and acidic residues.

It belongs to the HFCD (homooligomeric flavin containing Cys decarboxylase) superfamily. Interacts with the C-terminal domain of PPZ1. Component of the phosphopantothenoylcysteine decarboxylase (PPCDC) complex, a heterotrimer composed of CAB3, SIS2 and VHS3.

Its function is as follows. Component of the phosphopantothenoylcysteine decarboxylase (PPCDC) involved in the coenzyme A synthesis. Acts as an inhibitory subunit of protein phosphatase PPZ1, which is involved in many cellular processes such as G1-S transition or salt tolerance. This Saccharomyces cerevisiae (strain ATCC 204508 / S288c) (Baker's yeast) protein is Phosphopantothenoylcysteine decarboxylase subunit VHS3 (VHS3).